The chain runs to 114 residues: Large ribosomal subunit protein uL22 (114 aa).

This sequence belongs to the universal ribosomal protein uL22 family. As to quaternary structure, part of the 50S ribosomal subunit.

Functionally, this protein binds specifically to 23S rRNA; its binding is stimulated by other ribosomal proteins, e.g. L4, L17, and L20. It is important during the early stages of 50S assembly. It makes multiple contacts with different domains of the 23S rRNA in the assembled 50S subunit and ribosome. In terms of biological role, the globular domain of the protein is located near the polypeptide exit tunnel on the outside of the subunit, while an extended beta-hairpin is found that lines the wall of the exit tunnel in the center of the 70S ribosome. This is Large ribosomal subunit protein uL22 from Aeromonas salmonicida (strain A449).